The primary structure comprises 177 residues: MNHAQLRRVTAESFAHYRHGLAQLLFETVHGGASVGFMADLDMQQAYAWCDGLKADIAAGSLLLWVVAEDDNVLASAQLSLCQKPNGLNRAEVQKLMVLPSARGRGLGRQLMDEVEQVAVKHKRGLLHLDTEAGSVAEAFYSALAYTRVGELPGYCATPDGRLHPTAIYFKTLGQPT.

Positions A4–G174 constitute an N-acetyltransferase domain. Residues E27, L96–V98, G104–R109, D130–T131, and Y141 contribute to the acetyl-CoA site.

Functionally, renders tabtoxin-producing pathogens tolerant to their own phytotoxins. The protein is Acetyltransferase (ttr) of Pseudomonas amygdali pv. tabaci (Pseudomonas syringae pv. tabaci).